We begin with the raw amino-acid sequence, 205 residues long: Large ribosomal subunit protein bL21 (205 aa).

The interval 107–137 is disordered; the sequence is APAKKAAAKKEEAPKADTAPKAAAAPTEEAA. Positions 122-137 are enriched in low complexity; it reads ADTAPKAAAAPTEEAA.

Belongs to the bacterial ribosomal protein bL21 family. Part of the 50S ribosomal subunit. Contacts protein L20.

Functionally, this protein binds to 23S rRNA in the presence of protein L20. This chain is Large ribosomal subunit protein bL21, found in Hyphomonas neptunium (strain ATCC 15444).